The primary structure comprises 196 residues: MPVESGAGNDQPKRLTVLSGPSGVGKSTVVKELRRRRPEVWLSVSVTTRPPRPGETDGVEYYFVDDAEFDRLVAENELLEWAEFAGNRYGTPREPVLKRLAAGQPVLLEIDLNGARQVRANMPDAFLVFLAPPSWEELVRRLTGRGTESPEVIQRRLETARIELAAEKEFDVTLVNTSVHEVCDELLALIAAPSTQ.

Residues 1–24 (MPVESGAGNDQPKRLTVLSGPSGV) are disordered. Positions 13-191 (KRLTVLSGPS…VCDELLALIA (179 aa)) constitute a Guanylate kinase-like domain. 20 to 27 (GPSGVGKS) serves as a coordination point for ATP.

The protein belongs to the guanylate kinase family.

The protein localises to the cytoplasm. The enzyme catalyses GMP + ATP = GDP + ADP. Its function is as follows. Essential for recycling GMP and indirectly, cGMP. In Thermobifida fusca (strain YX), this protein is Guanylate kinase.